We begin with the raw amino-acid sequence, 142 residues long: Putative pre-16S rRNA nuclease (142 aa).

The protein belongs to the YqgF nuclease family.

Its subcellular location is the cytoplasm. Functionally, could be a nuclease involved in processing of the 5'-end of pre-16S rRNA. In Mycoplasmoides gallisepticum (strain R(low / passage 15 / clone 2)) (Mycoplasma gallisepticum), this protein is Putative pre-16S rRNA nuclease.